A 154-amino-acid polypeptide reads, in one-letter code: MADSSGRVGKSGGSGAGKGAVSAEQVIAGFNRLRQEQRGLASKAAELEMELNEHSLVIDTLKEVDETRKCYRMVGGVLVERTVKEVLPALEGNKEQIQKIIETLSQQLQAKGKELNEFREKHNIRLMGEDEKPAAKENSEGAGAKASSAGVLVS.

Disordered stretches follow at residues 1–20 (MADSSGRVGKSGGSGAGKGA) and 126–154 (LMGEDEKPAAKENSEGAGAKASSAGVLVS). Residues 9–18 (GKSGGSGAGK) are compositionally biased toward gly residues. Residues 126–139 (LMGEDEKPAAKENS) are compositionally biased toward basic and acidic residues. Residues 140–154 (EGAGAKASSAGVLVS) show a composition bias toward low complexity.

Belongs to the prefoldin subunit beta family. Heterohexamer of two PFD-alpha type and four PFD-beta type subunits. Component of the PAQosome complex which is responsible for the biogenesis of several protein complexes and which consists of R2TP complex members RUVBL1, RUVBL2, RPAP3 and PIH1D1, URI complex members PFDN2, PFDN6, PDRG1, UXT and URI1 as well as ASDURF, POLR2E and DNAAF10/WDR92. Interacts with URI1; the interaction is phosphorylation-dependent and occurs in a growth-dependent manner.

Its subcellular location is the nucleus. The protein resides in the cytoplasm. It localises to the mitochondrion. Binds specifically to cytosolic chaperonin (c-CPN) and transfers target proteins to it. Binds to nascent polypeptide chain and promotes folding in an environment in which there are many competing pathways for nonnative proteins. The protein is Prefoldin subunit 2 (Pfdn2) of Mus musculus (Mouse).